A 207-amino-acid polypeptide reads, in one-letter code: Serotonin N-acetyltransferase (207 aa).

The segment at 1–29 is disordered; that stretch reads MSTPSVHCLKPSPLHLPSGIPGSPGRQRR. The interval 28–35 is YWHAZ-binding; the sequence is RRHTLPAN. Position 31 is a phosphothreonine; by PKA (T31). Residues 35–196 form the N-acetyltransferase domain; the sequence is NEFRCLTPED…TFTEMHCSLR (162 aa). Residue L124 coordinates substrate. Acetyl-CoA-binding positions include 124–126 and 132–137; these read LAV and QQGKGS. M159 contributes to the substrate binding site. 168-170 provides a ligand contact to acetyl-CoA; the sequence is YQR. Residue S205 is modified to Phosphoserine; by PKA.

The protein belongs to the acetyltransferase family. AANAT subfamily. Monomer. Interacts with several 14-3-3 proteins, including YWHAB, YWHAE, YWHAG and YWHAZ, preferentially when phosphorylated at Thr-31. Phosphorylation on Ser-205 also allows binding to YWHAZ, but with a 10-fold lower affinity. The interaction with YWHAZ considerably increases affinity for arylalkylamines and acetyl-CoA and protects the enzyme from dephosphorylation and proteasomal degradation. It may also prevent thiol-dependent inactivation. The physiological stoichiometry of the interaction is not clear. In vitro studies show either 1:2 (i.e. 1 AANAT molecule per YWHAZ dimer) or 2:2. In terms of processing, cAMP-dependent phosphorylation on both N-terminal Thr-31 and C-terminal Ser-205 regulates AANAT activity by promoting interaction with 14-3-3 proteins. Highest expression in the pineal gland, followed by retina. Expressed at much lower levels in brainstem and pituitary gland. AANAT activity also detected at low levels in the olfactory lobe.

It localises to the cytoplasm. It catalyses the reaction a 2-arylethylamine + acetyl-CoA = an N-acetyl-2-arylethylamine + CoA + H(+). Its pathway is aromatic compound metabolism; melatonin biosynthesis; melatonin from serotonin: step 1/2. Functionally, controls the night/day rhythm of melatonin production in the pineal gland. Catalyzes the N-acetylation of serotonin into N-acetylserotonin, the penultimate step in the synthesis of melatonin. This Ovis aries (Sheep) protein is Serotonin N-acetyltransferase (AANAT).